A 209-amino-acid chain; its full sequence is Kynurenine formamidase (209 aa).

Position 19 (Trp-19) interacts with substrate. His-49, His-53, and Asp-55 together coordinate Zn(2+). His-59 acts as the Proton donor/acceptor in catalysis. Zn(2+)-binding residues include His-160 and Glu-172.

The protein belongs to the Cyclase 1 superfamily. KynB family. Homodimer. It depends on Zn(2+) as a cofactor.

It catalyses the reaction N-formyl-L-kynurenine + H2O = L-kynurenine + formate + H(+). Its pathway is amino-acid degradation; L-tryptophan degradation via kynurenine pathway; L-kynurenine from L-tryptophan: step 2/2. Catalyzes the hydrolysis of N-formyl-L-kynurenine to L-kynurenine, the second step in the kynurenine pathway of tryptophan degradation. In Ralstonia pickettii (strain 12J), this protein is Kynurenine formamidase.